Consider the following 583-residue polypeptide: Sensor protein SrrB (583 aa).

At 1 to 11 (MMSRLNSVVIK) the chain is on the cytoplasmic side. A helical membrane pass occupies residues 12–32 (LWLTIILIVTTVLILLSIALI). The Extracellular portion of the chain corresponds to 33–174 (TFMQYYFTQE…SIEDTNNAIT (142 aa)). Residues 175–195 (IITIITAVIFLTITTVFAFFL) form a helical membrane-spanning segment. Residues 196 to 583 (SSRITKPLRR…TFIIKLPKPE (388 aa)) lie on the Cytoplasmic side of the membrane. The HAMP domain occupies 197 to 249 (SRITKPLRRLRDQATRVSEGDYSYKPSVTTKDEIGQLSQAFNQMSTEIEEHVD). A Histidine kinase domain is found at 366-583 (NVSHELRTPI…TFIIKLPKPE (218 aa)). A Phosphohistidine; by autocatalysis modification is found at His369.

It localises to the cell membrane. It carries out the reaction ATP + protein L-histidine = ADP + protein N-phospho-L-histidine.. In terms of biological role, member of the two-component regulatory system SrrA/SrrB, which is involved in the global regulation of staphylococcal virulence factors in response to environmental oxygen levels as well as biofilm formation. Also plays an essential role in host-derived nitric oxide resistance by regulating hmp/flavohemoglobin, an enzyme that detoxifies nitric oxide by converting it to nitrate. Functions as a sensor protein kinase which is autophosphorylated at a histidine residue and transfers its phosphate group to SrrA. In turn, SrrA binds to the upstream promoter regions of the target genes to positively and negatively regulate their expression. The protein is Sensor protein SrrB (srrB) of Staphylococcus aureus.